Here is a 361-residue protein sequence, read N- to C-terminus: Phosphoserine aminotransferase (361 aa).

Position 42 (Arg-42) interacts with L-glutamate. Residues 76 to 77 (AT), Trp-102, Thr-152, Asp-172, and Gln-195 contribute to the pyridoxal 5'-phosphate site. Lys-196 carries the N6-(pyridoxal phosphate)lysine modification. 237–238 (NT) contacts pyridoxal 5'-phosphate.

It belongs to the class-V pyridoxal-phosphate-dependent aminotransferase family. SerC subfamily. Homodimer. Pyridoxal 5'-phosphate serves as cofactor.

The protein localises to the cytoplasm. The enzyme catalyses O-phospho-L-serine + 2-oxoglutarate = 3-phosphooxypyruvate + L-glutamate. The catalysed reaction is 4-(phosphooxy)-L-threonine + 2-oxoglutarate = (R)-3-hydroxy-2-oxo-4-phosphooxybutanoate + L-glutamate. It functions in the pathway amino-acid biosynthesis; L-serine biosynthesis; L-serine from 3-phospho-D-glycerate: step 2/3. The protein operates within cofactor biosynthesis; pyridoxine 5'-phosphate biosynthesis; pyridoxine 5'-phosphate from D-erythrose 4-phosphate: step 3/5. In terms of biological role, catalyzes the reversible conversion of 3-phosphohydroxypyruvate to phosphoserine and of 3-hydroxy-2-oxo-4-phosphonooxybutanoate to phosphohydroxythreonine. In Stenotrophomonas maltophilia (strain K279a), this protein is Phosphoserine aminotransferase.